The sequence spans 405 residues: uncharacterized protein (405 aa).

Over Met1–Arg18 the chain is Cytoplasmic. The helical transmembrane segment at Ile19–Val39 threads the bilayer. Residues Leu40–Asp46 are Periplasmic-facing. A helical membrane pass occupies residues Val47–Leu67. Over Leu68–Lys84 the chain is Cytoplasmic. Residues Ile85–Leu105 form a helical membrane-spanning segment. Thr106 is a topological domain (periplasmic). Residues Ala107–Gly127 traverse the membrane as a helical segment. Over Gln128–Asn155 the chain is Cytoplasmic. A helical membrane pass occupies residues Gly156–Trp176. A topological domain (periplasmic) is located at residue Gly177. A helical membrane pass occupies residues Gly178–Ile198. At Pro199–Tyr223 the chain is on the cytoplasmic side. The helical transmembrane segment at Gly224–Phe244 threads the bilayer. The Periplasmic segment spans residues Tyr245–Asp251. A helical membrane pass occupies residues Gly252–Pro272. Over Asn273–Asn282 the chain is Cytoplasmic. The helical transmembrane segment at Val283–Met303 threads the bilayer. Topologically, residues Pro304 to Lys308 are periplasmic. The chain crosses the membrane as a helical span at residues Ile309–Ala329. At Val330–Ala343 the chain is on the cytoplasmic side. The chain crosses the membrane as a helical span at residues Thr344–Met364. Ser365 is a topological domain (periplasmic). A helical transmembrane segment spans residues Trp366–Leu386. The Cytoplasmic segment spans residues Thr387 to Ser405.

It belongs to the major facilitator superfamily. YhhS family.

The protein resides in the cell inner membrane. In terms of biological role, confers high-level resistance to glyphosate when overexpressed. Overexpression has no effect on intracellular arabinose concentrations. This is an uncharacterized protein from Escherichia coli (strain K12).